The chain runs to 238 residues: tRNA (guanine-N(7)-)-methyltransferase (238 aa).

S-adenosyl-L-methionine is bound by residues Glu68, Glu93, Asp120, and Asp143. The active site involves Asp143. Substrate contacts are provided by residues Lys147, Asp179, and 216-219; that span reads TKFE.

This sequence belongs to the class I-like SAM-binding methyltransferase superfamily. TrmB family.

It carries out the reaction guanosine(46) in tRNA + S-adenosyl-L-methionine = N(7)-methylguanosine(46) in tRNA + S-adenosyl-L-homocysteine. It functions in the pathway tRNA modification; N(7)-methylguanine-tRNA biosynthesis. Its function is as follows. Catalyzes the formation of N(7)-methylguanine at position 46 (m7G46) in tRNA. In Shewanella oneidensis (strain ATCC 700550 / JCM 31522 / CIP 106686 / LMG 19005 / NCIMB 14063 / MR-1), this protein is tRNA (guanine-N(7)-)-methyltransferase.